A 673-amino-acid polypeptide reads, in one-letter code: MSKPFKLNSAFKPSGDQPEAIRRLEEGLEDGLAHQTLLGVTGSGKTFTIANVIADLQRPTMVLAPNKTLAAQLYGEMKEFFPENAVEYFVSYYDYYQPEAYVPSSDTFIEKDASVNEHIEQMRLSATKAMLERRDVVVVASVSAIYGLGDPDLYLKMMLHLTVGMIIDQRAILRRLAELQYARNDQAFQRGTFRVRGEVIDIFPAESDDIALRVELFDEEVERLSLFDPLTGQIVSTIPRFTIYPKTHYVTPRERIVQAMEEIKEELAARRKVLLENNKLLEEQRLTQRTQFDLEMMNELGYCSGIENYSRFLSGRGPGEPPPTLFDYLPADGLLVVDESHVTIPQIGGMYRGDRARKETLVEYGFRLPSALDNRPLKFEEFEALAPQTIYVSATPGNYELEKSGGDVVDQVVRPTGLLDPIIEVRPVATQVDDLLSEIRQRAAINERVLVTTLTKRMAEDLTEYLEEHGERVRYLHSDIDTVERMEIIRDLRLGEFDVLVGINLLREGLDMPEVSLVAILDADKEGFLRSERSLIQTIGRAARNVNGKAILYGDKITPSMAKAIGETERRREKQQKYNEEHGITPQGLNKKVVDILALGQNIAKTKAKGRGKSRPIVEPDNVPMDMSPKALQQKIHELEGLMMQHAQNLEFEEAAQIRDQLHLLRELFIAAS.

The region spanning 26 to 183 (EGLEDGLAHQ…RRLAELQYAR (158 aa)) is the Helicase ATP-binding domain. 39-46 (GVTGSGKT) lines the ATP pocket. Residues 92–115 (YYDYYQPEAYVPSSDTFIEKDASV) carry the Beta-hairpin motif. In terms of domain architecture, Helicase C-terminal spans 431-597 (QVDDLLSEIR…GLNKKVVDIL (167 aa)). Positions 608 to 627 (AKGRGKSRPIVEPDNVPMDM) are disordered. The UVR domain maps to 633–668 (QQKIHELEGLMMQHAQNLEFEEAAQIRDQLHLLREL).

It belongs to the UvrB family. In terms of assembly, forms a heterotetramer with UvrA during the search for lesions. Interacts with UvrC in an incision complex.

It is found in the cytoplasm. In terms of biological role, the UvrABC repair system catalyzes the recognition and processing of DNA lesions. A damage recognition complex composed of 2 UvrA and 2 UvrB subunits scans DNA for abnormalities. Upon binding of the UvrA(2)B(2) complex to a putative damaged site, the DNA wraps around one UvrB monomer. DNA wrap is dependent on ATP binding by UvrB and probably causes local melting of the DNA helix, facilitating insertion of UvrB beta-hairpin between the DNA strands. Then UvrB probes one DNA strand for the presence of a lesion. If a lesion is found the UvrA subunits dissociate and the UvrB-DNA preincision complex is formed. This complex is subsequently bound by UvrC and the second UvrB is released. If no lesion is found, the DNA wraps around the other UvrB subunit that will check the other stand for damage. The sequence is that of UvrABC system protein B from Escherichia coli O81 (strain ED1a).